A 214-amino-acid polypeptide reads, in one-letter code: Adenylate kinase (214 aa).

10–15 (GAGKGT) contributes to the ATP binding site. Residues 30-59 (STGDMLRAAIKAGTELGLNAKAVMDAGQLV) form an NMP region. Residues threonine 31, arginine 36, 57-59 (QLV), 85-88 (GFPR), and glutamine 92 contribute to the AMP site. An LID region spans residues 122-159 (GRRVHSGSGRTYHVVFNPPKVEGKDDVTGEDLVIRADD). ATP-binding positions include arginine 123 and 132-133 (TY). 2 residues coordinate AMP: arginine 156 and arginine 167. Position 200 (glutamine 200) interacts with ATP.

It belongs to the adenylate kinase family. As to quaternary structure, monomer.

It is found in the cytoplasm. The catalysed reaction is AMP + ATP = 2 ADP. It functions in the pathway purine metabolism; AMP biosynthesis via salvage pathway; AMP from ADP: step 1/1. Its function is as follows. Catalyzes the reversible transfer of the terminal phosphate group between ATP and AMP. Plays an important role in cellular energy homeostasis and in adenine nucleotide metabolism. The sequence is that of Adenylate kinase from Aeromonas salmonicida (strain A449).